We begin with the raw amino-acid sequence, 236 residues long: uncharacterized protein (236 aa).

The disordered stretch occupies residues 217–236 (GESPDNVVRGEGGFGSTGGH). The span at 226–236 (GEGGFGSTGGH) shows a compositional bias: gly residues.

This is an uncharacterized protein from Ostreid herpesvirus 1 (isolate France) (OsHV-1).